Here is a 1134-residue protein sequence, read N- to C-terminus: Tyrosine-protein kinase receptor Tie-1 (1134 aa).

The first 22 residues, 1–22, serve as a signal peptide directing secretion; the sequence is MVWWGSSLLLPTLFLASHVGAS. Over 23–755 the chain is Extracellular; sequence VDLTLLANLR…SRAAEEGLDQ (733 aa). Residues 43-123 enclose the Ig-like C2-type 1 domain; the sequence is CVSGEAGAGR…VLYVHNSPGA (81 aa). 2 N-linked (GlcNAc...) asparagine glycosylation sites follow: Asn81 and Asn159. 3 EGF-like domains span residues 212 to 254, 256 to 301, and 303 to 343; these read GCGA…TRCE, ACRE…SQCQ, and ACAP…VHCE. Intrachain disulfides connect Cys226-Cys235, Cys229-Cys242, Cys244-Cys253, Cys266-Cys276, Cys270-Cys289, Cys291-Cys300, Cys313-Cys325, Cys319-Cys331, and Cys333-Cys342. Residues 349–440 enclose the Ig-like C2-type 2 domain; the sequence is PQILSMATEV…GQDSRRFKVN (92 aa). Fibronectin type-III domains follow at residues 444–543, 546–638, and 642–736; these read PPVP…CPEP, QPWL…LPPS, and APRH…LGNG. Residues Asn501, Asn592, and Asn705 are each glycosylated (N-linked (GlcNAc...) asparagine). The helical transmembrane segment at 756–780 threads the bilayer; the sequence is QLVLAVVGSVSATCLTILAALLALV. The Cytoplasmic portion of the chain corresponds to 781–1134; sequence CIRRSCLHRR…AGIDATAEEA (354 aa). Residues 835 to 1114 form the Protein kinase domain; that stretch reads ITFEDLIGEG…RMLEARKAYV (280 aa). ATP is bound by residues 841-849 and Lys866; that span reads IGEGNFGQV. Asp975 serves as the catalytic Proton acceptor. Tyr1003 is modified (phosphotyrosine; by autocatalysis).

It belongs to the protein kinase superfamily. Tyr protein kinase family. Tie subfamily. In terms of assembly, heterodimer with TEK/TIE2. Interacts with SVEP1 (via C-terminus). Post-translationally, phosphorylated on tyrosine residues in response to ANGPT1, most likely by TEK/TIE2. Specifically expressed in developing vascular endothelial cells. Abundantly expressed in lung and heart, moderately in brain, liver and kidney, and weakly in thymus, spleen and testis.

The protein localises to the cell membrane. The catalysed reaction is L-tyrosyl-[protein] + ATP = O-phospho-L-tyrosyl-[protein] + ADP + H(+). Transmembrane tyrosine-protein kinase that may modulate TEK/TIE2 activity and contribute to the regulation of angiogenesis. This is Tyrosine-protein kinase receptor Tie-1 (Tie1) from Mus musculus (Mouse).